Consider the following 1165-residue polypeptide: Pesticidal crystal protein Cry1Da (1165 aa).

Belongs to the delta endotoxin family.

Its function is as follows. Promotes colloidosmotic lysis by binding to the midgut epithelial cells of many lepidopteran larvae. The sequence is that of Pesticidal crystal protein Cry1Da (cry1Da) from Bacillus thuringiensis subsp. aizawai.